We begin with the raw amino-acid sequence, 620 residues long: Probable potassium transport system protein Kup (620 aa).

Helical transmembrane passes span 11–31 (LAFL…LYAF), 51–71 (ILSL…LLLV), 100–120 (IAML…VITP), 138–158 (LAPY…AVQA), 167–187 (FFAP…AHAI), 202–222 (AVHF…LVVL), 246–266 (WFAL…AYLL), 288–308 (LILL…SGIF), 334–354 (GQIY…FVML), 364–384 (AAYG…LVLV), 396–416 (VVTI…STST), and 418–438 (LMEG…VMYI).

Belongs to the HAK/KUP transporter (TC 2.A.72) family.

The protein localises to the cell inner membrane. It catalyses the reaction K(+)(in) + H(+)(in) = K(+)(out) + H(+)(out). Its function is as follows. Transport of potassium into the cell. Likely operates as a K(+):H(+) symporter. This Vibrio cholerae serotype O1 (strain ATCC 39315 / El Tor Inaba N16961) protein is Probable potassium transport system protein Kup.